The primary structure comprises 301 residues: Probable alpha-L-glutamate ligase (301 aa).

Residues 104-287 (LQLLSRKGIG…IAGMIIEYIE (184 aa)) enclose the ATP-grasp domain. Residues Lys141, 178–179 (EY), Asp187, and 211–213 (RSN) each bind ATP. Asp248, Glu260, and Asn262 together coordinate Mg(2+). Mn(2+)-binding residues include Asp248, Glu260, and Asn262.

Belongs to the RimK family. Mg(2+) serves as cofactor. It depends on Mn(2+) as a cofactor.

In Methanococcoides burtonii (strain DSM 6242 / NBRC 107633 / OCM 468 / ACE-M), this protein is Probable alpha-L-glutamate ligase.